We begin with the raw amino-acid sequence, 374 residues long: Tuliposide A-converting enzyme b1, amyloplastic (374 aa).

Residues 1-68 (MSVALFCGPP…TNSSLSPSPT (68 aa)) constitute an amyloplast transit peptide. S226 acts as the Acyl-ester intermediate in catalysis. Residues D316 and H348 each act as charge relay system in the active site.

Belongs to the AB hydrolase superfamily. Homodimer. In terms of tissue distribution, highly expressed in pistil and bulb scales. Lower expression in stem, and barely detected in root, leaf, petal and stamen.

Its subcellular location is the plastid. The protein localises to the amyloplast. The enzyme catalyses 6-tuliposide A = tulipalin A + D-glucose. Its function is as follows. Lactone-forming carboxylesterases, specifically catalyzing intramolecular transesterification, but not hydrolysis. Involved in the biosynthesis of tulipalins, defensive chemicals that show antimicrobial activities against a broad range of strains of bacteria and fungi. Substrates are 6-tuliposide A &gt; 6-tuliposide B. The protein is Tuliposide A-converting enzyme b1, amyloplastic (TCEA-B1) of Tulipa gesneriana (Garden tulip).